The chain runs to 133 residues: Hydrogenase maturation factor HypA (133 aa).

Residue H2 participates in Ni(2+) binding. Zn(2+) contacts are provided by C73, C75, C105, and C108.

The protein belongs to the HypA/HybF family.

Involved in the maturation of [NiFe] hydrogenases. Required for nickel insertion into the metal center of the hydrogenase. The chain is Hydrogenase maturation factor HypA from Methanosarcina barkeri (strain Fusaro / DSM 804).